The chain runs to 159 residues: Developmental pluripotency-associated protein 3 (159 aa).

Disordered stretches follow at residues 1-31 (MDPS…GASQ) and 140-159 (GWDP…PLQP). A compositionally biased stretch (polar residues) spans 149–159 (IGNQDTKPLQP).

As to expression, low expression in testis, ovary and thymus. Expressed in embryonic stem and carcinoma cells. Highly expressed in testicular germ cell tumors.

It localises to the nucleus. The protein resides in the cytoplasm. Primordial germ cell (PGCs)-specific protein involved in epigenetic chromatin reprogramming in the zygote following fertilization. In zygotes, DNA demethylation occurs selectively in the paternal pronucleus before the first cell division, while the adjacent maternal pronucleus and certain paternally-imprinted loci are protected from this process. Participates in protection of DNA methylation in the maternal pronucleus by preventing conversion of 5mC to 5hmC: specifically recognizes and binds histone H3 dimethylated at 'Lys-9' (H3K9me2) on maternal genome, and protects maternal genome from TET3-mediated conversion to 5hmC and subsequent DNA demethylation. Does not bind paternal chromatin, which is mainly packed into protamine and does not contain much H3K9me2 mark. Also protects imprinted loci that are marked with H3K9me2 in mature sperm from DNA demethylation in early embryogenesis. May be important for the totipotent/pluripotent states continuing through preimplantation development. Also involved in chromatin condensation in oocytogenesis. This Homo sapiens (Human) protein is Developmental pluripotency-associated protein 3 (DPPA3).